An 85-amino-acid polypeptide reads, in one-letter code: Sec-independent protein translocase protein TatA (85 aa).

The helical transmembrane segment at 1–21 (MGIFDWKHWLIILIVVVLVFG) threads the bilayer. Residues 43–85 (VNTEEGENRPAEPQTGTSAGDTLNKTQTIEGQAQKVDTPVRKD) form a disordered region. Positions 56–73 (QTGTSAGDTLNKTQTIEG) are enriched in polar residues.

Belongs to the TatA/E family. As to quaternary structure, the Tat system comprises two distinct complexes: a TatABC complex, containing multiple copies of TatA, TatB and TatC subunits, and a separate TatA complex, containing only TatA subunits. Substrates initially bind to the TatABC complex, which probably triggers association of the separate TatA complex to form the active translocon.

It localises to the cell inner membrane. Part of the twin-arginine translocation (Tat) system that transports large folded proteins containing a characteristic twin-arginine motif in their signal peptide across membranes. TatA could form the protein-conducting channel of the Tat system. The polypeptide is Sec-independent protein translocase protein TatA (Azotobacter vinelandii (strain DJ / ATCC BAA-1303)).